The sequence spans 239 residues: Norbelladine 4'-O-methyltransferase 5 (239 aa).

Residues V55, E77, 79–80 (GV), S85, D103, and A132 contribute to the S-adenosyl-L-methionine site. Residue D155 participates in a divalent metal cation binding. Position 157 (D157) interacts with S-adenosyl-L-methionine. A divalent metal cation-binding residues include D181 and N182.

This sequence belongs to the class I-like SAM-binding methyltransferase superfamily. Cation-dependent O-methyltransferase family. Requires Mg(2+) as cofactor.

It carries out the reaction norbelladine + S-adenosyl-L-methionine = 4'-O-methylnorbelladine + S-adenosyl-L-homocysteine + H(+). It participates in alkaloid biosynthesis. 4'-O-methyltransferase converting norbelladine to 4'-O-methylnorbelladine. 4'-O-methylnorbelladine is a precursor to all Amaryllidaceae alkaloids such as galanthamine, lycorine and haemanthamine, and including haemanthamine- and crinamine-type alkaloids, promising anticancer agents. This chain is Norbelladine 4'-O-methyltransferase 5, found in Narcissus aff. pseudonarcissus MK-2014 (Daffodil).